We begin with the raw amino-acid sequence, 209 residues long: Imidazole glycerol phosphate synthase subunit HisH (209 aa).

The 205-residue stretch at 1 to 205 folds into the Glutamine amidotransferase type-1 domain; sequence MIAIIDYGMG…KGVVESWKSS (205 aa). Residue cysteine 79 is the Nucleophile of the active site. Active-site residues include histidine 180 and glutamate 182.

As to quaternary structure, heterodimer of HisH and HisF.

The protein resides in the cytoplasm. The enzyme catalyses 5-[(5-phospho-1-deoxy-D-ribulos-1-ylimino)methylamino]-1-(5-phospho-beta-D-ribosyl)imidazole-4-carboxamide + L-glutamine = D-erythro-1-(imidazol-4-yl)glycerol 3-phosphate + 5-amino-1-(5-phospho-beta-D-ribosyl)imidazole-4-carboxamide + L-glutamate + H(+). The catalysed reaction is L-glutamine + H2O = L-glutamate + NH4(+). It participates in amino-acid biosynthesis; L-histidine biosynthesis; L-histidine from 5-phospho-alpha-D-ribose 1-diphosphate: step 5/9. In terms of biological role, IGPS catalyzes the conversion of PRFAR and glutamine to IGP, AICAR and glutamate. The HisH subunit catalyzes the hydrolysis of glutamine to glutamate and ammonia as part of the synthesis of IGP and AICAR. The resulting ammonia molecule is channeled to the active site of HisF. This Bacillus cereus (strain ATCC 10987 / NRS 248) protein is Imidazole glycerol phosphate synthase subunit HisH.